The primary structure comprises 454 residues: Rhizobactin siderophore biosynthesis protein RhbE (454 aa).

7–13 (AGIGIGP) lines the FAD pocket.

It belongs to the lysine N(6)-hydroxylase/L-ornithine N(5)-oxygenase family. The cofactor is FAD.

It participates in siderophore biosynthesis; rhizobactin biosynthesis. The polypeptide is Rhizobactin siderophore biosynthesis protein RhbE (rhbE) (Rhizobium meliloti (strain 1021) (Ensifer meliloti)).